A 172-amino-acid polypeptide reads, in one-letter code: NAD(P)H-quinone oxidoreductase subunit I, chloroplastic (172 aa).

4Fe-4S ferredoxin-type domains follow at residues 55-84 (GRIH…VDWK) and 95-124 (LNYS…MTEE). Residues cysteine 64, cysteine 67, cysteine 70, cysteine 74, cysteine 104, cysteine 107, cysteine 110, and cysteine 114 each coordinate [4Fe-4S] cluster.

It belongs to the complex I 23 kDa subunit family. As to quaternary structure, NDH is composed of at least 16 different subunits, 5 of which are encoded in the nucleus. Requires [4Fe-4S] cluster as cofactor.

It is found in the plastid. It localises to the chloroplast thylakoid membrane. It catalyses the reaction a plastoquinone + NADH + (n+1) H(+)(in) = a plastoquinol + NAD(+) + n H(+)(out). It carries out the reaction a plastoquinone + NADPH + (n+1) H(+)(in) = a plastoquinol + NADP(+) + n H(+)(out). Its function is as follows. NDH shuttles electrons from NAD(P)H:plastoquinone, via FMN and iron-sulfur (Fe-S) centers, to quinones in the photosynthetic chain and possibly in a chloroplast respiratory chain. The immediate electron acceptor for the enzyme in this species is believed to be plastoquinone. Couples the redox reaction to proton translocation, and thus conserves the redox energy in a proton gradient. This Olimarabidopsis pumila (Dwarf rocket) protein is NAD(P)H-quinone oxidoreductase subunit I, chloroplastic.